The primary structure comprises 414 residues: Secernin-1 (414 aa).

The protein belongs to the peptidase C69 family. Secernin subfamily.

It is found in the cytoplasm. Its function is as follows. Regulates exocytosis in mast cells. Increases both the extent of secretion and the sensitivity of mast cells to stimulation with calcium. This chain is Secernin-1 (Scrn1), found in Rattus norvegicus (Rat).